The primary structure comprises 549 residues: Mitochondrial hydroperoxide bicyclase CYP50918A1 (549 aa).

The interval 1 to 75 (MPDAFDVSDD…PQGNRKPAVL (75 aa)) is disordered. Residues 8–26 (SDDKQLVDQQLTRDSDSKP) are compositionally biased toward basic and acidic residues. Residues 27–41 (AAKPASKQKPPSKVP) show a composition bias toward low complexity. Residue cysteine 491 coordinates heme. The tract at residues 528-549 (DTGDHGPPNGKFSVIKPRQPKH) is disordered.

The protein belongs to the cytochrome P450 family. It depends on heme as a cofactor.

It localises to the mitochondrion. The catalysed reaction is (13S)-hydroperoxy-(9Z,11E,15Z)-octadecatrienoate = plasmodiophorol A. It carries out the reaction (13S)-hydroperoxy-(9Z,11E,15Z)-octadecatrienoate = plasmodiophorol B. It participates in lipid metabolism; oxylipin biosynthesis. Its function is as follows. Cytochrome P450 hydroperoxide bicyclase involved in the metabolism of oxylipins natural products such as egregiachlorides, hybridalactone, ecklonialactones and related bicyclic oxylipins. Isomerizes the hydroperoxides into epoxyalcohols via epoxyallylic radical. Can use alpha-linolenic 13-hydroperoxide ((9Z,11E,13S,15Z)-13-hydroperoxy-9,11,15-octadecatrienoic, 13-HPOT) as preferred substrate to produce the heterobicyclic oxylipins plasmodiophorol A (6-oxabicyclo[3.1.0]hexane) and plasmodiophorol B (2-oxabicyclo[2.2.1]heptane) at the ratio 12:1 and a minor product plasmodiophorol C (cyclopentanediol) formed through the hydrolysis of plasmodiophorols A and B and, to a lower extent, active with linoleic acid 13-hydroperoxide ((9Z,11E,13S)-13-hydroperoxy-9,11-octadecadienoic, 13-HPOD), linoleic acid 9-hydroperoxide ((9S,10E,12Z)-9-hydroperoxy-10,12-octadecadienoic, 9-HPOD) and alpha-linolenic 9-hydroperoxide ((9S,10E,12Z,15Z)-9-hydroperoxy-10,12,15-octadecatrienoic, 9-HPOT). The protein is Mitochondrial hydroperoxide bicyclase CYP50918A1 of Plasmodiophora brassicae (Clubroot disease agent).